The primary structure comprises 260 residues: MDPIALTAAVGADLLGDGRPETLWLGIGTLLMLIGTFYFIVKGWGVTDKEAREYYSITILVPGIASAAYLSMFFGIGLTEVQVGSEMLDIYYARYADWLFTTPLLLLDLALLAKVDRVSIGTLVGVDALMIVTGLVGALSHTPLARYTWWLFSTICMIVVLYFLATSLRAAAKERGPEVASTFNTLTALVLVLWTAYPILWIIGTEGAGVVGLGIETLLFMVLDVTAKVGFGFILLRSRAILGDTEAPEPSAGAEASAAD.

Positions 1-6 (MDPIAL) are excised as a propeptide. The Extracellular segment spans residues 7–20 (TAAVGADLLGDGRP). A helical transmembrane segment spans residues 21–42 (ETLWLGIGTLLMLIGTFYFIVK). Topologically, residues 43–51 (GWGVTDKEA) are cytoplasmic. Residues 52 to 73 (REYYSITILVPGIASAAYLSMF) form a helical membrane-spanning segment. Over 74–91 (FGIGLTEVQVGSEMLDIY) the chain is Extracellular. Residues 92 to 113 (YARYADWLFTTPLLLLDLALLA) traverse the membrane as a helical segment. The Cytoplasmic segment spans residues 114 to 116 (KVD). Residues 117-139 (RVSIGTLVGVDALMIVTGLVGAL) traverse the membrane as a helical segment. Residues 140-143 (SHTP) are Extracellular-facing. The chain crosses the membrane as a helical span at residues 144–172 (LARYTWWLFSTICMIVVLYFLATSLRAAA). The Cytoplasmic portion of the chain corresponds to 173–176 (KERG). Residues 177 to 204 (PEVASTFNTLTALVLVLWTAYPILWIIG) traverse the membrane as a helical segment. Residues 205 to 212 (TEGAGVVG) are Extracellular-facing. Residues 213–245 (LGIETLLFMVLDVTAKVGFGFILLRSRAILGDT) form a helical membrane-spanning segment. Lysine 228 carries the post-translational modification N6-(retinylidene)lysine. Residues 246–260 (EAPEPSAGAEASAAD) are Cytoplasmic-facing.

It belongs to the archaeal/bacterial/fungal opsin family.

It is found in the cell membrane. Light-driven proton pump. It may interact with bacterioruberin in the claret membrane. The chain is Archaerhodopsin-1 from Halorubrum ezzemoulense (Halorubrum chaoviator).